Here is a 176-residue protein sequence, read N- to C-terminus: ATP-dependent protease subunit HslV (176 aa).

T6 is an active-site residue. 3 residues coordinate Na(+): G161, C164, and T167.

The protein belongs to the peptidase T1B family. HslV subfamily. In terms of assembly, a double ring-shaped homohexamer of HslV is capped on each side by a ring-shaped HslU homohexamer. The assembly of the HslU/HslV complex is dependent on binding of ATP.

The protein resides in the cytoplasm. The enzyme catalyses ATP-dependent cleavage of peptide bonds with broad specificity.. Its activity is regulated as follows. Allosterically activated by HslU binding. Its function is as follows. Protease subunit of a proteasome-like degradation complex believed to be a general protein degrading machinery. This Thermotoga sp. (strain RQ2) protein is ATP-dependent protease subunit HslV.